The following is a 129-amino-acid chain: Defensin-like protein 182 (129 aa).

The first 26 residues, 1–26 (METVTSLVFIVNLLIIFTSVVNQARG), serve as a signal peptide directing secretion. 8 disulfide bridges follow: C29–C70, C36–C55, C39–C64, C43–C66, C83–C129, C94–C114, C99–C123, and C103–C125.

It belongs to the DEFL family.

It is found in the secreted. Confers broad-spectrum resistance to pathogens. This Arabidopsis thaliana (Mouse-ear cress) protein is Defensin-like protein 182 (PDF3.2).